The chain runs to 828 residues: Phenylalanine--tRNA ligase beta subunit (828 aa).

Residues 43 to 161 (LSKNTNLVVG…DQIALGSNAL (119 aa)) form the tRNA-binding domain. The interval 203 to 230 (KKKEKKTINYKTKNSKDQTNRKTTPKLN) is disordered. In terms of domain architecture, B5 spans 436 to 519 (RTNPTISLDL…RFYGCHKLPP (84 aa)). Residues Asp-497, Asp-503, and Asp-507 each contribute to the Mg(2+) site. Positions 736-828 (PKFPTVIRDL…LIKHFRIEIR (93 aa)) constitute an FDX-ACB domain.

This sequence belongs to the phenylalanyl-tRNA synthetase beta subunit family. Type 1 subfamily. Tetramer of two alpha and two beta subunits. The cofactor is Mg(2+).

The protein localises to the cytoplasm. It carries out the reaction tRNA(Phe) + L-phenylalanine + ATP = L-phenylalanyl-tRNA(Phe) + AMP + diphosphate + H(+). This chain is Phenylalanine--tRNA ligase beta subunit, found in Aster yellows witches'-broom phytoplasma (strain AYWB).